We begin with the raw amino-acid sequence, 354 residues long: S-adenosylmethionine:tRNA ribosyltransferase-isomerase (354 aa).

It belongs to the QueA family. As to quaternary structure, monomer.

It localises to the cytoplasm. The catalysed reaction is 7-aminomethyl-7-carbaguanosine(34) in tRNA + S-adenosyl-L-methionine = epoxyqueuosine(34) in tRNA + adenine + L-methionine + 2 H(+). The protein operates within tRNA modification; tRNA-queuosine biosynthesis. Transfers and isomerizes the ribose moiety from AdoMet to the 7-aminomethyl group of 7-deazaguanine (preQ1-tRNA) to give epoxyqueuosine (oQ-tRNA). The polypeptide is S-adenosylmethionine:tRNA ribosyltransferase-isomerase (Klebsiella pneumoniae (strain 342)).